The sequence spans 314 residues: Ribosomal RNA small subunit methyltransferase H (314 aa).

Residues 36 to 38 (GGH), aspartate 56, phenylalanine 80, aspartate 102, and glutamine 109 each bind S-adenosyl-L-methionine. The disordered stretch occupies residues 278–300 (GGRSLKSIGKMKPSEEEVADNPR). Basic and acidic residues predominate over residues 289–300 (KPSEEEVADNPR).

It belongs to the methyltransferase superfamily. RsmH family.

The protein resides in the cytoplasm. It carries out the reaction cytidine(1402) in 16S rRNA + S-adenosyl-L-methionine = N(4)-methylcytidine(1402) in 16S rRNA + S-adenosyl-L-homocysteine + H(+). Its function is as follows. Specifically methylates the N4 position of cytidine in position 1402 (C1402) of 16S rRNA. This chain is Ribosomal RNA small subunit methyltransferase H, found in Photorhabdus laumondii subsp. laumondii (strain DSM 15139 / CIP 105565 / TT01) (Photorhabdus luminescens subsp. laumondii).